A 729-amino-acid chain; its full sequence is MSKFIEPSSEDIKIEQLYKDMGLSDEEYAKVCDILGREPNFTEIGIFSVMWSEHCSYKHSKPFLTQFPTSGEHVLMGPGEGAGVVDIGDNQAVVFKVESHNHPSAVEPYQGAATGVGGIIRDIVSIGARPINLLNSLRFGELTEKQNRRLLRGVVAGIGGYGNCIGIPTTAGEIEFDDRYDGNPLVNAMCVGIIDHDMVQKGTAKGVGNSVIYVGLKTGRDGIHGATFASEELSEDSESKRPSVQIGDPFVGKKLMEATLEAITFDELVGIQDMGAAGLTSSSSEMAAKGGSGLHLRLEQVPTREQGISPYEMMLSETQERMLLVVEKGTEQKFLDLFDKHELDSAVIGEVTDTDRFVLTYEDEVFADIPVQPLSDEAPVYVLEGTSPEYNETKNDYSSVDVESVFDQLLQHPTIASKRYLYEQYDQQVGANTIVKPGLQASVVRVEGTDKAIASTIDGEARYVFNNPYEGGKIVVAEAYRNLISVGATPLAMTDCLNYGSPEKKEIYQQLADSTKGMAEACEVLSTPVVSGNVSLYNETRETSIFPTPVVGMVGLIDDISYLNHFNPSVGDTLYVVGDTNDDFGGSQIEKLLYGQVNHEFESIDLSQEVRKGESIKQAIREGVASHVQTVGKGGLLLTLARISAHYQLGLQAKLSVTNAQLFSETQGRYIVIVKNGQSLNCDYAVEIGKVTNDQQFKVTNEQSEIVRDVKHLNDLWEGAIPQCMTATD.

Residue His-54 is part of the active site. ATP is bound by residues Tyr-57 and Lys-96. Mg(2+) is bound at residue Glu-98. Substrate-binding positions include 99 to 102 (SHNH) and Arg-121. His-100 functions as the Proton acceptor in the catalytic mechanism. Position 122 (Asp-122) interacts with Mg(2+). Gln-245 contacts substrate. Asp-273 serves as a coordination point for Mg(2+). Substrate is bound at residue 317-319 (ETQ). Residues Asp-495 and Gly-532 each contribute to the ATP site. Asn-533 lines the Mg(2+) pocket. Ser-535 serves as a coordination point for substrate.

The protein belongs to the FGAMS family. Monomer. Part of the FGAM synthase complex composed of 1 PurL, 1 PurQ and 2 PurS subunits.

The protein localises to the cytoplasm. The enzyme catalyses N(2)-formyl-N(1)-(5-phospho-beta-D-ribosyl)glycinamide + L-glutamine + ATP + H2O = 2-formamido-N(1)-(5-O-phospho-beta-D-ribosyl)acetamidine + L-glutamate + ADP + phosphate + H(+). It participates in purine metabolism; IMP biosynthesis via de novo pathway; 5-amino-1-(5-phospho-D-ribosyl)imidazole from N(2)-formyl-N(1)-(5-phospho-D-ribosyl)glycinamide: step 1/2. Its function is as follows. Part of the phosphoribosylformylglycinamidine synthase complex involved in the purines biosynthetic pathway. Catalyzes the ATP-dependent conversion of formylglycinamide ribonucleotide (FGAR) and glutamine to yield formylglycinamidine ribonucleotide (FGAM) and glutamate. The FGAM synthase complex is composed of three subunits. PurQ produces an ammonia molecule by converting glutamine to glutamate. PurL transfers the ammonia molecule to FGAR to form FGAM in an ATP-dependent manner. PurS interacts with PurQ and PurL and is thought to assist in the transfer of the ammonia molecule from PurQ to PurL. This chain is Phosphoribosylformylglycinamidine synthase subunit PurL, found in Staphylococcus saprophyticus subsp. saprophyticus (strain ATCC 15305 / DSM 20229 / NCIMB 8711 / NCTC 7292 / S-41).